Consider the following 382-residue polypeptide: Serine/threonine-protein kinase US3 homolog (382 aa).

Basic and acidic residues predominate over residues Met1 to Thr10. Residues Met1 to Asp75 are disordered. Residues Trp12–Asp24 are compositionally biased toward polar residues. Residues Ala45–Asp75 are compositionally biased toward acidic residues. Residues Tyr93 to Phe379 form the Protein kinase domain. ATP is bound by residues Leu99–Val107 and Lys122. The Proton acceptor role is filled by Asp207.

This sequence belongs to the protein kinase superfamily. Ser/Thr protein kinase family. In terms of processing, phosphorylated by protein 49; this phosphorylation regulates subsequent phosphorylation of proteins 26 and 29 by US3 homolog. Autophosphorylated.

Its subcellular location is the host cytoplasm. The protein resides in the host nucleus. The catalysed reaction is L-seryl-[protein] + ATP = O-phospho-L-seryl-[protein] + ADP + H(+). It carries out the reaction L-threonyl-[protein] + ATP = O-phospho-L-threonyl-[protein] + ADP + H(+). Functionally, multifunctional serine/threonine kinase that plays a role in several processes including egress of virus particles from the nucleus, modulation of the actin cytoskeleton and inhibition of apoptosis. Phosphorylates protein 26 and 29, two critical regulators of capsid budding from nucleus to endoplasmic reticulum, thereby facilitating virion egress. Modulates and redistributes host components of the nuclear envelope, including LMNA, emerin/EMD and the nuclear matrix protein MATR3. Phosphorylates envelope glycoprotein B (gB), probably to direct it to the cell surface. Promotes virus intracellular spread by restructuring host cell cytoskeleton. Blocks host apoptosis to extend cell survival and allow efficient viral replication. Promotes viral gene expression by phosphorylating host HDAC2 to reduce viral genome silencing. The protein is Serine/threonine-protein kinase US3 homolog of Equine herpesvirus 1 (strain Ab4p) (EHV-1).